The chain runs to 150 residues: Interferon antagonist OPG027 (150 aa).

Belongs to the orthopoxvirus OPG027 family.

Functionally, inhibits antiviral activity induced by type I interferons. Does not block signal transduction of IFN, but is important to counteract the host antiviral state induced by a pre-treatment with IFN. The protein is Interferon antagonist OPG027 (OPG027) of Homo sapiens (Human).